A 372-amino-acid polypeptide reads, in one-letter code: N-methyl-L-tryptophan oxidase (372 aa).

4-34 (DLIIIGSGSVGAAAGYYATRAGLNVLMTDAH) serves as a coordination point for FAD. S-8alpha-FAD cysteine is present on C308.

It belongs to the MSOX/MTOX family. MTOX subfamily. Monomer. FAD serves as cofactor.

It catalyses the reaction N(alpha)-methyl-L-tryptophan + O2 + H2O = L-tryptophan + formaldehyde + H2O2. In terms of biological role, catalyzes the oxidative demethylation of N-methyl-L-tryptophan. In Shigella boydii serotype 18 (strain CDC 3083-94 / BS512), this protein is N-methyl-L-tryptophan oxidase.